Here is a 323-residue protein sequence, read N- to C-terminus: Ubiquinone biosynthesis protein COQ4, mitochondrial (323 aa).

Histidine 203, aspartate 204, histidine 207, and glutamate 219 together coordinate Zn(2+).

The protein belongs to the COQ4 family. Component of a multi-subunit COQ enzyme complex, composed of at least COQ3, COQ4, COQ5, COQ6, COQ7 and COQ9. Zn(2+) serves as cofactor.

It localises to the mitochondrion inner membrane. It carries out the reaction a 4-hydroxy-3-methoxy-5-(all-trans-polyprenyl)benzoate + H(+) = a 2-methoxy-6-(all-trans-polyprenyl)phenol + CO2. The protein operates within cofactor biosynthesis; ubiquinone biosynthesis. Lyase that catalyzes the C1-decarboxylation of 4-hydroxy-3-methoxy-5-(all-trans-polyprenyl)benzoic acid into 2-methoxy-6-(all-trans-polyprenyl)phenol during ubiquinone biosynthesis. In Eremothecium gossypii (strain ATCC 10895 / CBS 109.51 / FGSC 9923 / NRRL Y-1056) (Yeast), this protein is Ubiquinone biosynthesis protein COQ4, mitochondrial.